Consider the following 480-residue polypeptide: Putative auxin transporter-like protein 4 (480 aa).

Residues 1 to 66 (MASEKVETIV…DAWFSCASNQ (66 aa)) are Cytoplasmic-facing. The chain crosses the membrane as a helical span at residues 67 to 84 (VAQVLLTLPYSFSQLGMA). Residues 85–86 (SG) lie on the Extracellular side of the membrane. The chain crosses the membrane as a helical span at residues 87-107 (VAFQVFYGLMGSWTAYLISVL). The Cytoplasmic portion of the chain corresponds to 108-143 (YVEYRTRRERDKVDFRNHVIQWFEVLDGLLGRHWRN). The helical transmembrane segment at 144 to 164 (AGLLFNCTFLLFGSVIQLIAC) threads the bilayer. Topologically, residues 165-179 (ASNIYYINDRLDKRT) are extracellular. A helical transmembrane segment spans residues 180 to 200 (WTYIFGACCATTVFVPSFHNY). Residues 201–203 (RVW) are Cytoplasmic-facing. The chain crosses the membrane as a helical span at residues 204–224 (SFLGLLMTSYTAWYLTVAAVV). Over 225–241 (HGKVDGAAPRAGPSKTM) the chain is Extracellular. Residues 242–262 (VLYFTGATNILYTFGGHAVTV) traverse the membrane as a helical segment. Residues 263–275 (EIMHAMWRPRRFK) lie on the Cytoplasmic side of the membrane. Residues 276–296 (MIYLAATAYVLTLTLPSAAAM) traverse the membrane as a helical segment. At 297 to 323 (YWAFGDALLDHSNAFALLPRTPWRDAA) the chain is on the extracellular side. Residues 324–344 (VVLMLIHQFITFGFACTPLYF) traverse the membrane as a helical segment. Residues 345–365 (VWEKAIGVHGGAGVLRRAAAR) lie on the Cytoplasmic side of the membrane. Residues 366–386 (LPVVLPIWFLAVIFPFFGPIN) form a helical membrane-spanning segment. A topological domain (extracellular) is located at residue serine 387. Residues 388–408 (TVGSFLVSFTVYIIPAMAHMA) form a helical membrane-spanning segment. The Cytoplasmic portion of the chain corresponds to 409–433 (TFAPAAARENAVEPPPRALGGWPGT). Residues 434–454 (FAANCFVVAWVLVVGFGFGGW) traverse the membrane as a helical segment. At 455 to 480 (ASTVNFVRQVDTFGLFTKCYQCPPRH) the chain is on the extracellular side.

It belongs to the amino acid/polyamine transporter 2 family. Amino acid/auxin permease (AAAP) (TC 2.A.18.1) subfamily.

Its subcellular location is the cell membrane. Its function is as follows. Carrier protein involved in proton-driven auxin influx. May mediate the formation of auxin gradient from developing leaves (site of auxin biosynthesis) to tips. The protein is Putative auxin transporter-like protein 4 of Oryza sativa subsp. japonica (Rice).